The chain runs to 354 residues: Homoserine O-succinyltransferase (354 aa).

Residue C146 is the Acyl-thioester intermediate of the active site. Substrate contacts are provided by K167 and S196. The Proton acceptor role is filled by H239. The active site involves E241. Residue R253 coordinates substrate.

It belongs to the MetA family.

The protein localises to the cytoplasm. It catalyses the reaction L-homoserine + succinyl-CoA = O-succinyl-L-homoserine + CoA. Its pathway is amino-acid biosynthesis; L-methionine biosynthesis via de novo pathway; O-succinyl-L-homoserine from L-homoserine: step 1/1. Functionally, transfers a succinyl group from succinyl-CoA to L-homoserine, forming succinyl-L-homoserine. This Methylobacter tundripaludum (strain ATCC BAA-1195 / DSM 17260 / SV96) protein is Homoserine O-succinyltransferase.